Consider the following 476-residue polypeptide: Ubiquitin-conjugating enzyme E2 variant 3 (476 aa).

The 144-residue stretch at 2-145 (EFSAETLRQQ…EEELPLYSLS (144 aa)) folds into the UEV domain. Residue 185 to 213 (GDMALACLLAVSAKGTAGKLLLLDPTDGE) participates in NAD(+) binding.

It in the N-terminal section; belongs to the ubiquitin-conjugating enzyme family. UEV subfamily. The protein in the C-terminal section; belongs to the LDH/MDH superfamily. Homodimer.

Its function is as follows. Possible negative regulator of polyubiquitination. This is Ubiquitin-conjugating enzyme E2 variant 3 (uevld) from Xenopus tropicalis (Western clawed frog).